Here is a 215-residue protein sequence, read N- to C-terminus: 3-isopropylmalate dehydratase small subunit (215 aa).

The protein belongs to the LeuD family. LeuD type 1 subfamily. As to quaternary structure, heterodimer of LeuC and LeuD.

The catalysed reaction is (2R,3S)-3-isopropylmalate = (2S)-2-isopropylmalate. It functions in the pathway amino-acid biosynthesis; L-leucine biosynthesis; L-leucine from 3-methyl-2-oxobutanoate: step 2/4. Its function is as follows. Catalyzes the isomerization between 2-isopropylmalate and 3-isopropylmalate, via the formation of 2-isopropylmaleate. The sequence is that of 3-isopropylmalate dehydratase small subunit from Acinetobacter baumannii (strain AB307-0294).